A 541-amino-acid polypeptide reads, in one-letter code: Calcium-dependent protein kinase 26 (541 aa).

Over residues 1-11 (MGQCCTGGGKA) the composition is skewed to gly residues. The interval 1-74 (MGQCCTGGGK…AGPIGEVLER (74 aa)) is disordered. G2 is lipidated: N-myristoyl glycine. Low complexity predominate over residues 38-67 (AKQQPCSPAAKAAATEAAAAASSSKKPAGP). The 259-residue stretch at 83–341 (YSIGKELGRG…AFQVLNHPWI (259 aa)) folds into the Protein kinase domain. Residues 89-97 (LGRGQFGVT) and K112 each bind ATP. Catalysis depends on D207, which acts as the Proton acceptor. The autoinhibitory domain stretch occupies residues 347–377 (APDVPLDNVVLNRLKQFRAMNQFKKAALRII). 4 consecutive EF-hand domains span residues 384-419 (EEIKGLKEMFKNIDKDNSGTITLEELKNGLAKQGTK), 420-455 (FSDNEIEQLMEAADADGNGIIDYEEFVTATVHMNKM), 456-491 (DREEHLYTAFQYFDKDNSGYITKEELEQALKEQGLY), and 493-526 (ANEIKDVITDADSNNDGRIDYSEFVAMMRKGSGC). Positions 397, 399, 401, 403, 408, 433, 435, 437, 444, 469, 471, 473, 475, 480, 504, 506, 508, 510, and 515 each coordinate Ca(2+).

It belongs to the protein kinase superfamily. Ser/Thr protein kinase family. CDPK subfamily. In terms of tissue distribution, specifically expressed in heading panicles, spikelets and mature pollen grains. Not expressed in vegetative tissues.

The protein resides in the membrane. The enzyme catalyses L-seryl-[protein] + ATP = O-phospho-L-seryl-[protein] + ADP + H(+). The catalysed reaction is L-threonyl-[protein] + ATP = O-phospho-L-threonyl-[protein] + ADP + H(+). Its activity is regulated as follows. Activated by calcium. Autophosphorylation may play an important role in the regulation of the kinase activity. Its function is as follows. May play a role in signal transduction pathways that involve calcium as a second messenger. This Oryza sativa subsp. japonica (Rice) protein is Calcium-dependent protein kinase 26.